The chain runs to 299 residues: Oxygen-dependent coproporphyrinogen-III oxidase (299 aa).

Residue serine 92 participates in substrate binding. Positions 96 and 106 each coordinate a divalent metal cation. The Proton donor role is filled by histidine 106. A substrate-binding site is contributed by 108–110 (NVR). Residues histidine 145 and histidine 175 each contribute to the a divalent metal cation site. Positions 240–275 (YVEFNLVWDRGTLFGLQTGGRTESILMSMPPLVRWE) are important for dimerization. Substrate is bound at residue 258–260 (GGR).

It belongs to the aerobic coproporphyrinogen-III oxidase family. Homodimer. A divalent metal cation serves as cofactor.

The protein resides in the cytoplasm. The catalysed reaction is coproporphyrinogen III + O2 + 2 H(+) = protoporphyrinogen IX + 2 CO2 + 2 H2O. The protein operates within porphyrin-containing compound metabolism; protoporphyrin-IX biosynthesis; protoporphyrinogen-IX from coproporphyrinogen-III (O2 route): step 1/1. In terms of biological role, involved in the heme biosynthesis. Catalyzes the aerobic oxidative decarboxylation of propionate groups of rings A and B of coproporphyrinogen-III to yield the vinyl groups in protoporphyrinogen-IX. The chain is Oxygen-dependent coproporphyrinogen-III oxidase from Shigella dysenteriae serotype 1 (strain Sd197).